The chain runs to 839 residues: Probable beta-glucosidase I (839 aa).

Asparagine 197 carries an N-linked (GlcNAc...) asparagine glycan. Residue aspartate 225 is part of the active site. Residues 395–555 (DGKTGFSFKV…GQEELISNAV (161 aa)) form the PA14 domain. N-linked (GlcNAc...) asparagine glycosylation occurs at asparagine 620.

The protein belongs to the glycosyl hydrolase 3 family.

Its subcellular location is the secreted. It catalyses the reaction Hydrolysis of terminal, non-reducing beta-D-glucosyl residues with release of beta-D-glucose.. It functions in the pathway glycan metabolism; cellulose degradation. Beta-glucosidases are one of a number of cellulolytic enzymes involved in the degradation of cellulosic biomass. Catalyzes the last step releasing glucose from the inhibitory cellobiose. This Aspergillus flavus (strain ATCC 200026 / FGSC A1120 / IAM 13836 / NRRL 3357 / JCM 12722 / SRRC 167) protein is Probable beta-glucosidase I (bglI).